Reading from the N-terminus, the 182-residue chain is Crossover junction endodeoxyribonuclease RuvC (182 aa).

Residues D7, E67, and D139 contribute to the active site. Residues D7, E67, and D139 each coordinate Mg(2+).

This sequence belongs to the RuvC family. Homodimer which binds Holliday junction (HJ) DNA. The HJ becomes 2-fold symmetrical on binding to RuvC with unstacked arms; it has a different conformation from HJ DNA in complex with RuvA. In the full resolvosome a probable DNA-RuvA(4)-RuvB(12)-RuvC(2) complex forms which resolves the HJ. Requires Mg(2+) as cofactor.

The protein localises to the cytoplasm. The enzyme catalyses Endonucleolytic cleavage at a junction such as a reciprocal single-stranded crossover between two homologous DNA duplexes (Holliday junction).. Its function is as follows. The RuvA-RuvB-RuvC complex processes Holliday junction (HJ) DNA during genetic recombination and DNA repair. Endonuclease that resolves HJ intermediates. Cleaves cruciform DNA by making single-stranded nicks across the HJ at symmetrical positions within the homologous arms, yielding a 5'-phosphate and a 3'-hydroxyl group; requires a central core of homology in the junction. The consensus cleavage sequence is 5'-(A/T)TT(C/G)-3'. Cleavage occurs on the 3'-side of the TT dinucleotide at the point of strand exchange. HJ branch migration catalyzed by RuvA-RuvB allows RuvC to scan DNA until it finds its consensus sequence, where it cleaves and resolves the cruciform DNA. This is Crossover junction endodeoxyribonuclease RuvC from Bordetella parapertussis (strain 12822 / ATCC BAA-587 / NCTC 13253).